A 35-amino-acid polypeptide reads, in one-letter code: U5-ctenitoxin-Co1a (35 aa).

4 disulfides stabilise this stretch: C4–C18, C11–C24, C17–C32, and C26–C30.

Expressed by the venom gland.

It is found in the secreted. In terms of biological role, blocks voltage-gated sodium channels (Nav). This is U5-ctenitoxin-Co1a from Ctenus ornatus (Brazilian spider).